The sequence spans 378 residues: tRNA (guanine(37)-N(1))-methyltransferase (378 aa).

S-adenosyl-L-methionine-binding positions include His196, 234–235, 262–263, and Asn282; these read DL and DA.

The protein belongs to the class I-like SAM-binding methyltransferase superfamily. TRM5/TYW2 family. As to quaternary structure, monomer.

It localises to the mitochondrion matrix. The protein localises to the nucleus. The protein resides in the cytoplasm. It catalyses the reaction guanosine(37) in tRNA + S-adenosyl-L-methionine = N(1)-methylguanosine(37) in tRNA + S-adenosyl-L-homocysteine + H(+). In terms of biological role, specifically methylates the N1 position of guanosine-37 in various cytoplasmic and mitochondrial tRNAs. Methylation is not dependent on the nature of the nucleoside 5' of the target nucleoside. This is the first step in the biosynthesis of wybutosine (yW), a modified base adjacent to the anticodon of tRNAs and required for accurate decoding. This Trichomonas vaginalis (strain ATCC PRA-98 / G3) protein is tRNA (guanine(37)-N(1))-methyltransferase.